The sequence spans 458 residues: Flap endonuclease 1 (458 aa).

An N-domain region spans residues 1–105 (MGIKGLTGLL…GVLSKRFEKR (105 aa)). Residue Asp34 coordinates Mg(2+). Positions 47 and 71 each coordinate DNA. Mg(2+) contacts are provided by Asp87, Glu159, Glu161, Asp180, and Asp182. Residues 123–254 (DVDRFSRRTV…KSALKLIREF (132 aa)) are I-domain. Glu159 contacts DNA. Residues Gly232 and Asp234 each coordinate DNA. Asp234 lines the Mg(2+) pocket. 2 disordered regions span residues 268–347 (AAAR…IPDE) and 416–458 (GFFT…AKKK). 2 stretches are compositionally biased toward acidic residues: residues 275–285 (AEEEDEEEAEE) and 293–309 (EMPDDEDGEKDSDDEEE). Basic and acidic residues predominate over residues 310 to 329 (AERRKKAEAAKKKKAQEKAK). The interaction with PCNA stretch occupies residues 410 to 418 (QQGRLDGFF). Residues 442–452 (RKGEDKAEGSG) show a composition bias toward basic and acidic residues.

It belongs to the XPG/RAD2 endonuclease family. FEN1 subfamily. In terms of assembly, interacts with PCNA. Three molecules of FEN1 bind to one PCNA trimer with each molecule binding to one PCNA monomer. PCNA stimulates the nuclease activity without altering cleavage specificity. It depends on Mg(2+) as a cofactor. Phosphorylated. Phosphorylation upon DNA damage induces relocalization to the nuclear plasma.

The protein resides in the nucleus. The protein localises to the nucleolus. It localises to the nucleoplasm. Its subcellular location is the mitochondrion. Its function is as follows. Structure-specific nuclease with 5'-flap endonuclease and 5'-3' exonuclease activities involved in DNA replication and repair. During DNA replication, cleaves the 5'-overhanging flap structure that is generated by displacement synthesis when DNA polymerase encounters the 5'-end of a downstream Okazaki fragment. It enters the flap from the 5'-end and then tracks to cleave the flap base, leaving a nick for ligation. Also involved in the long patch base excision repair (LP-BER) pathway, by cleaving within the apurinic/apyrimidinic (AP) site-terminated flap. Acts as a genome stabilization factor that prevents flaps from equilibrating into structures that lead to duplications and deletions. Also possesses 5'-3' exonuclease activity on nicked or gapped double-stranded DNA, and exhibits RNase H activity. Also involved in replication and repair of rDNA and in repairing mitochondrial DNA. The polypeptide is Flap endonuclease 1 (Coprinopsis cinerea (strain Okayama-7 / 130 / ATCC MYA-4618 / FGSC 9003) (Inky cap fungus)).